Consider the following 729-residue polypeptide: Catalase-peroxidase (729 aa).

The tryptophyl-tyrosyl-methioninium (Trp-Tyr) (with M-244) cross-link spans 95 to 218 (WHSAGTYRGA…LAAVEMGLVY (124 aa)). His-96 functions as the Proton acceptor in the catalytic mechanism. The tryptophyl-tyrosyl-methioninium (Tyr-Met) (with W-95) cross-link spans 218-244 (YVNPEGPHGHPDPVASGPDVRDTFARM). His-259 contributes to the heme b binding site.

Belongs to the peroxidase family. Peroxidase/catalase subfamily. As to quaternary structure, homodimer or homotetramer. Heme b serves as cofactor. Formation of the three residue Trp-Tyr-Met cross-link is important for the catalase, but not the peroxidase activity of the enzyme.

It carries out the reaction H2O2 + AH2 = A + 2 H2O. It catalyses the reaction 2 H2O2 = O2 + 2 H2O. In terms of biological role, bifunctional enzyme with both catalase and broad-spectrum peroxidase activity. This Synechococcus sp. (strain CC9605) protein is Catalase-peroxidase.